We begin with the raw amino-acid sequence, 287 residues long: 4-hydroxybenzoate octaprenyltransferase (287 aa).

7 helical membrane passes run 30–50 (ALWI…FALG), 92–112 (IAIA…LNGL), 133–153 (FFAI…PMAF), 158–178 (DTVP…SVAY), 207–227 (VLAI…LGAA), 232–252 (WPYW…YTLI), and 266–286 (HNNW…ALAV).

Belongs to the UbiA prenyltransferase family. The cofactor is Mg(2+).

The protein localises to the cell inner membrane. It carries out the reaction all-trans-octaprenyl diphosphate + 4-hydroxybenzoate = 4-hydroxy-3-(all-trans-octaprenyl)benzoate + diphosphate. Its pathway is cofactor biosynthesis; ubiquinone biosynthesis. In terms of biological role, catalyzes the prenylation of para-hydroxybenzoate (PHB) with an all-trans polyprenyl group. Mediates the second step in the final reaction sequence of ubiquinone-8 (UQ-8) biosynthesis, which is the condensation of the polyisoprenoid side chain with PHB, generating the first membrane-bound Q intermediate 3-octaprenyl-4-hydroxybenzoate. The sequence is that of 4-hydroxybenzoate octaprenyltransferase from Burkholderia mallei (strain NCTC 10247).